A 247-amino-acid polypeptide reads, in one-letter code: MSKLFWAMLSFITRLPVPRRWSQGLDFEHYSRGIITFPLIGLLLGAISGLVFMVLQAWCGVPLAALFSVLVLALMTGGFHLDGLADTCDGVFSARSRDRMLEIMRDSRLGTHGGLALIFVVLAKILVLSELALRGEPILALLAAACAVSRGTAALLMYRHRYAREEGLGNVFIGKIDGRQTCVTLGLAAIFAAVLLPGMHGVAAMVVTMVAIFILGQLLKRTLGGQTGDTLGAAIELGELVFLLALL.

The next 5 helical transmembrane spans lie at 34-54, 59-79, 113-133, 138-158, and 194-214; these read IITFPLIGLLLGAISGLVFMV, CGVPLAALFSVLVLALMTGGF, GGLALIFVVLAKILVLSELAL, ILALLAAACAVSRGTAALLMY, and VLLPGMHGVAAMVVTMVAIFI.

This sequence belongs to the CobS family. It depends on Mg(2+) as a cofactor.

It localises to the cell inner membrane. The enzyme catalyses alpha-ribazole + adenosylcob(III)inamide-GDP = adenosylcob(III)alamin + GMP + H(+). It catalyses the reaction alpha-ribazole 5'-phosphate + adenosylcob(III)inamide-GDP = adenosylcob(III)alamin 5'-phosphate + GMP + H(+). Its pathway is cofactor biosynthesis; adenosylcobalamin biosynthesis; adenosylcobalamin from cob(II)yrinate a,c-diamide: step 7/7. Its function is as follows. Joins adenosylcobinamide-GDP and alpha-ribazole to generate adenosylcobalamin (Ado-cobalamin). Also synthesizes adenosylcobalamin 5'-phosphate from adenosylcobinamide-GDP and alpha-ribazole 5'-phosphate. This chain is Adenosylcobinamide-GDP ribazoletransferase, found in Shigella boydii serotype 4 (strain Sb227).